Reading from the N-terminus, the 565-residue chain is NAD-dependent malic enzyme (565 aa).

The active-site Proton donor is the Y104. An NAD(+)-binding site is contributed by R157. The active-site Proton acceptor is the K175. Residues E246, D247, and D270 each coordinate a divalent metal cation. 2 residues coordinate NAD(+): D270 and N418.

This sequence belongs to the malic enzymes family. As to quaternary structure, homotetramer. Mg(2+) serves as cofactor. Requires Mn(2+) as cofactor.

The catalysed reaction is (S)-malate + NAD(+) = pyruvate + CO2 + NADH. It catalyses the reaction oxaloacetate + H(+) = pyruvate + CO2. The protein is NAD-dependent malic enzyme of Edwardsiella ictaluri (strain 93-146).